Reading from the N-terminus, the 441-residue chain is ATP-dependent protease ATPase subunit HslU (441 aa).

Residues isoleucine 18, 60-65, aspartate 254, glutamate 319, and arginine 391 each bind ATP; that span reads GVGKTE.

This sequence belongs to the ClpX chaperone family. HslU subfamily. In terms of assembly, a double ring-shaped homohexamer of HslV is capped on each side by a ring-shaped HslU homohexamer. The assembly of the HslU/HslV complex is dependent on binding of ATP.

Its subcellular location is the cytoplasm. ATPase subunit of a proteasome-like degradation complex; this subunit has chaperone activity. The binding of ATP and its subsequent hydrolysis by HslU are essential for unfolding of protein substrates subsequently hydrolyzed by HslV. HslU recognizes the N-terminal part of its protein substrates and unfolds these before they are guided to HslV for hydrolysis. This chain is ATP-dependent protease ATPase subunit HslU, found in Shewanella loihica (strain ATCC BAA-1088 / PV-4).